The sequence spans 312 residues: Tyrosine recombinase XerC (312 aa).

The region spanning 1 to 103 (MISAFYAFLD…AIKSFSQYCI (103 aa)) is the Core-binding (CB) domain. A Tyr recombinase domain is found at 124–306 (ELPSPITYEQ…SMKLKKQTHE (183 aa)). Residues Arg-164, Lys-188, His-258, Arg-261, and His-284 contribute to the active site. Tyr-293 functions as the O-(3'-phospho-DNA)-tyrosine intermediate in the catalytic mechanism.

The protein belongs to the 'phage' integrase family. XerC subfamily. As to quaternary structure, forms a cyclic heterotetrameric complex composed of two molecules of XerC and two molecules of XerD.

The protein resides in the cytoplasm. Site-specific tyrosine recombinase, which acts by catalyzing the cutting and rejoining of the recombining DNA molecules. The XerC-XerD complex is essential to convert dimers of the bacterial chromosome into monomers to permit their segregation at cell division. It also contributes to the segregational stability of plasmids. This Chlamydia caviae (strain ATCC VR-813 / DSM 19441 / 03DC25 / GPIC) (Chlamydophila caviae) protein is Tyrosine recombinase XerC.